The primary structure comprises 255 residues: Thiazole synthase (255 aa).

The Schiff-base intermediate with DXP role is filled by Lys-96. Residues Gly-157, Ala-183–Gly-184, and Asn-205–Thr-206 each bind 1-deoxy-D-xylulose 5-phosphate.

Belongs to the ThiG family. In terms of assembly, homotetramer. Forms heterodimers with either ThiH or ThiS.

It localises to the cytoplasm. It carries out the reaction [ThiS sulfur-carrier protein]-C-terminal-Gly-aminoethanethioate + 2-iminoacetate + 1-deoxy-D-xylulose 5-phosphate = [ThiS sulfur-carrier protein]-C-terminal Gly-Gly + 2-[(2R,5Z)-2-carboxy-4-methylthiazol-5(2H)-ylidene]ethyl phosphate + 2 H2O + H(+). Its pathway is cofactor biosynthesis; thiamine diphosphate biosynthesis. In terms of biological role, catalyzes the rearrangement of 1-deoxy-D-xylulose 5-phosphate (DXP) to produce the thiazole phosphate moiety of thiamine. Sulfur is provided by the thiocarboxylate moiety of the carrier protein ThiS. In vitro, sulfur can be provided by H(2)S. The sequence is that of Thiazole synthase from Staphylococcus haemolyticus (strain JCSC1435).